A 142-amino-acid polypeptide reads, in one-letter code: Aspartate 1-decarboxylase (142 aa).

Ser-25 acts as the Schiff-base intermediate with substrate; via pyruvic acid in catalysis. The residue at position 25 (Ser-25) is a Pyruvic acid (Ser). Thr-57 is a substrate binding site. Residue Tyr-58 is the Proton donor of the active site. Position 73-75 (73-75 (GAA)) interacts with substrate.

The protein belongs to the PanD family. Heterooctamer of four alpha and four beta subunits. The cofactor is pyruvate. Is synthesized initially as an inactive proenzyme, which is activated by self-cleavage at a specific serine bond to produce a beta-subunit with a hydroxyl group at its C-terminus and an alpha-subunit with a pyruvoyl group at its N-terminus.

It is found in the cytoplasm. It carries out the reaction L-aspartate + H(+) = beta-alanine + CO2. It participates in cofactor biosynthesis; (R)-pantothenate biosynthesis; beta-alanine from L-aspartate: step 1/1. Its function is as follows. Catalyzes the pyruvoyl-dependent decarboxylation of aspartate to produce beta-alanine. The protein is Aspartate 1-decarboxylase of Mycobacterium leprae (strain Br4923).